Here is a 370-residue protein sequence, read N- to C-terminus: Neutral protease 2 homolog AFUB_070680 (370 aa).

The signal sequence occupies residues 1–19 (MKVTILASAILALINGALA). Positions 20 to 172 (LPANTPTLDV…PQAIKLLDRR (153 aa)) are excised as a propeptide. 2 disulfides stabilise this stretch: Cys-178/Cys-250 and Cys-257/Cys-275. Residue His-300 coordinates Zn(2+). Glu-301 is a catalytic residue. Positions 304 and 315 each coordinate Zn(2+).

This sequence belongs to the peptidase M35 family. Zn(2+) serves as cofactor.

It localises to the secreted. The enzyme catalyses Preferential cleavage of bonds with hydrophobic residues in P1'. Also 3-Asn-|-Gln-4 and 8-Gly-|-Ser-9 bonds in insulin B chain.. Functionally, secreted metalloproteinase that allows assimilation of proteinaceous substrates. Shows high activities on basic nuclear substrates such as histone and protamine. May be involved in virulence. In Aspergillus fumigatus (strain CBS 144.89 / FGSC A1163 / CEA10) (Neosartorya fumigata), this protein is Neutral protease 2 homolog AFUB_070680.